The sequence spans 249 residues: Basic leucine zipper 23 (249 aa).

Positions lysine 66–lysine 90 are disordered. Positions glutamate 74–glutamine 121 constitute a bZIP domain. The basic motif stretch occupies residues lysine 78–lysine 98. The segment at leucine 102–leucine 116 is leucine-zipper.

It localises to the nucleus. In terms of biological role, transcription factor involved in the response to zinc ion deficiency. Binds to the consensus sequence 5'-[AG]TGTCGACA[CT]-3' also called zinc deficiency response element (ZDRE). The ZDRE sequence is conserved in the plant kingdom and present in the promoters of genes that constitute the primary response to zinc deficiency, comprising additional ZIP metal transporter genes. Required for zinc accumulation in roots. Mediates the expression of the zinc transporter ZIP12 during growth in zinc-deficient conditions. ZIP12 transporter is involved in zinc uptake in roots. In Arabidopsis thaliana (Mouse-ear cress), this protein is Basic leucine zipper 23.